Consider the following 200-residue polypeptide: Crossover junction endodeoxyribonuclease RuvC (200 aa).

Residues D18, E78, and D151 contribute to the active site. Residues D18, E78, and D151 each contribute to the Mg(2+) site.

Belongs to the RuvC family. In terms of assembly, homodimer which binds Holliday junction (HJ) DNA. The HJ becomes 2-fold symmetrical on binding to RuvC with unstacked arms; it has a different conformation from HJ DNA in complex with RuvA. In the full resolvosome a probable DNA-RuvA(4)-RuvB(12)-RuvC(2) complex forms which resolves the HJ. Requires Mg(2+) as cofactor.

It is found in the cytoplasm. It carries out the reaction Endonucleolytic cleavage at a junction such as a reciprocal single-stranded crossover between two homologous DNA duplexes (Holliday junction).. Its function is as follows. The RuvA-RuvB-RuvC complex processes Holliday junction (HJ) DNA during genetic recombination and DNA repair. Endonuclease that resolves HJ intermediates. Cleaves cruciform DNA by making single-stranded nicks across the HJ at symmetrical positions within the homologous arms, yielding a 5'-phosphate and a 3'-hydroxyl group; requires a central core of homology in the junction. The consensus cleavage sequence is 5'-(A/T)TT(C/G)-3'. Cleavage occurs on the 3'-side of the TT dinucleotide at the point of strand exchange. HJ branch migration catalyzed by RuvA-RuvB allows RuvC to scan DNA until it finds its consensus sequence, where it cleaves and resolves the cruciform DNA. This chain is Crossover junction endodeoxyribonuclease RuvC, found in Cytophaga hutchinsonii (strain ATCC 33406 / DSM 1761 / CIP 103989 / NBRC 15051 / NCIMB 9469 / D465).